We begin with the raw amino-acid sequence, 318 residues long: Acetyl-coenzyme A carboxylase carboxyl transferase subunit alpha (318 aa).

One can recognise a CoA carboxyltransferase C-terminal domain in the interval 39 to 293 (KLEKKVDKMR…HEALARHLKE (255 aa)).

This sequence belongs to the AccA family. In terms of assembly, acetyl-CoA carboxylase is a heterohexamer composed of biotin carboxyl carrier protein (AccB), biotin carboxylase (AccC) and two subunits each of ACCase subunit alpha (AccA) and ACCase subunit beta (AccD).

Its subcellular location is the cytoplasm. It catalyses the reaction N(6)-carboxybiotinyl-L-lysyl-[protein] + acetyl-CoA = N(6)-biotinyl-L-lysyl-[protein] + malonyl-CoA. Its pathway is lipid metabolism; malonyl-CoA biosynthesis; malonyl-CoA from acetyl-CoA: step 1/1. Component of the acetyl coenzyme A carboxylase (ACC) complex. First, biotin carboxylase catalyzes the carboxylation of biotin on its carrier protein (BCCP) and then the CO(2) group is transferred by the carboxyltransferase to acetyl-CoA to form malonyl-CoA. This chain is Acetyl-coenzyme A carboxylase carboxyl transferase subunit alpha, found in Geobacter metallireducens (strain ATCC 53774 / DSM 7210 / GS-15).